Consider the following 486-residue polypeptide: Galactose-1-phosphate uridylyltransferase (486 aa).

Belongs to the galactose-1-phosphate uridylyltransferase type 2 family.

Its subcellular location is the cytoplasm. The catalysed reaction is alpha-D-galactose 1-phosphate + UDP-alpha-D-glucose = alpha-D-glucose 1-phosphate + UDP-alpha-D-galactose. It participates in carbohydrate metabolism; galactose metabolism. The polypeptide is Galactose-1-phosphate uridylyltransferase (Lacticaseibacillus paracasei (strain ATCC 334 / BCRC 17002 / CCUG 31169 / CIP 107868 / KCTC 3260 / NRRL B-441) (Lactobacillus paracasei)).